The sequence spans 153 residues: Putative pre-16S rRNA nuclease (153 aa).

Belongs to the YqgF nuclease family.

The protein resides in the cytoplasm. In terms of biological role, could be a nuclease involved in processing of the 5'-end of pre-16S rRNA. The chain is Putative pre-16S rRNA nuclease from Prochlorococcus marinus (strain MIT 9215).